The following is a 634-amino-acid chain: Extracellular metalloproteinase MEP (634 aa).

The signal sequence occupies residues 1-18; it reads MRGLLLAGALALPASVFA. A propeptide spanning residues 19–245 is cleaved from the precursor; the sequence is HPAHQSYGLN…IHGVVDYVAE (227 aa). H429 lines the Zn(2+) pocket. E430 is an active-site residue. H433 provides a ligand contact to Zn(2+).

The protein belongs to the peptidase M36 family. Requires Zn(2+) as cofactor.

The protein localises to the secreted. In terms of biological role, secreted metalloproteinase that allows assimilation of proteinaceous substrates and probably acts as a virulence factor. This Neosartorya fischeri (strain ATCC 1020 / DSM 3700 / CBS 544.65 / FGSC A1164 / JCM 1740 / NRRL 181 / WB 181) (Aspergillus fischerianus) protein is Extracellular metalloproteinase MEP (MEP).